We begin with the raw amino-acid sequence, 73 residues long: Large ribosomal subunit protein bL31 (73 aa).

Cys16, Cys18, Cys37, and Cys40 together coordinate Zn(2+).

This sequence belongs to the bacterial ribosomal protein bL31 family. Type A subfamily. Part of the 50S ribosomal subunit. Requires Zn(2+) as cofactor.

Binds the 23S rRNA. This Marinobacter nauticus (strain ATCC 700491 / DSM 11845 / VT8) (Marinobacter aquaeolei) protein is Large ribosomal subunit protein bL31.